The primary structure comprises 618 residues: DNA mismatch repair protein MutL (618 aa).

This sequence belongs to the DNA mismatch repair MutL/HexB family.

Its function is as follows. This protein is involved in the repair of mismatches in DNA. It is required for dam-dependent methyl-directed DNA mismatch repair. May act as a 'molecular matchmaker', a protein that promotes the formation of a stable complex between two or more DNA-binding proteins in an ATP-dependent manner without itself being part of a final effector complex. This chain is DNA mismatch repair protein MutL, found in Porphyromonas gingivalis (strain ATCC 33277 / DSM 20709 / CIP 103683 / JCM 12257 / NCTC 11834 / 2561).